Consider the following 473-residue polypeptide: Psoralen synthase (473 aa).

Residues 1-17 (YFFPLFLVTIFLYKWLV) form a helical membrane-spanning segment. Positions 350-355 (TAPLLV) are substrate specificity. Cys-425 provides a ligand contact to heme.

This sequence belongs to the cytochrome P450 family. Heme is required as a cofactor.

The protein resides in the microsome membrane. It catalyses the reaction (7S)-marmesin + reduced [NADPH--hemoprotein reductase] + O2 = psoralen + acetone + oxidized [NADPH--hemoprotein reductase] + 2 H2O + H(+). Its pathway is secondary metabolite biosynthesis. Its function is as follows. Involved in the biosynthesis of coumarins and furanocoumarins (FCs), natural products required for defense responses against attacks by predators with potential medical and agroindustrial usages such as anticoagulant, rodenticide and artificial vanilla substitutes. Involved in linear furanocumarin (psoralen) biosynthesis. Converts marmesin to psoralen and, with much lower affinity, 5-hydroxymarmesin to bergaptol. The sequence is that of Psoralen synthase from Pastinaca sativa (Wild parsnip).